Reading from the N-terminus, the 367-residue chain is Anhydro-N-acetylmuramic acid kinase (367 aa).

Residue 13-20 (GTSMDGAD) participates in ATP binding.

Belongs to the anhydro-N-acetylmuramic acid kinase family.

It carries out the reaction 1,6-anhydro-N-acetyl-beta-muramate + ATP + H2O = N-acetyl-D-muramate 6-phosphate + ADP + H(+). Its pathway is amino-sugar metabolism; 1,6-anhydro-N-acetylmuramate degradation. It functions in the pathway cell wall biogenesis; peptidoglycan recycling. Functionally, catalyzes the specific phosphorylation of 1,6-anhydro-N-acetylmuramic acid (anhMurNAc) with the simultaneous cleavage of the 1,6-anhydro ring, generating MurNAc-6-P. Is required for the utilization of anhMurNAc either imported from the medium or derived from its own cell wall murein, and thus plays a role in cell wall recycling. The polypeptide is Anhydro-N-acetylmuramic acid kinase (Neisseria meningitidis serogroup B (strain ATCC BAA-335 / MC58)).